Consider the following 1118-residue polypeptide: Protein argonaute 1B (1118 aa).

Disordered regions lie at residues 1 to 175 and 188 to 246; these read MALQ…SRTV and APMV…RFPL. Over residues 10–24 the composition is skewed to basic residues; sequence PHHHQVPIMVKKKRT. Low complexity predominate over residues 25–35; that stretch reads GSGSTGESSGE. Gly residues-rich tracts occupy residues 54–92, 100–110, and 118–128; these read QHGGGRGWVPQHGGRGGGQYQGRGGHYQGRGGQGSHHPG, GRGGPGSHHPG, and GRGGSGSHHPG. Low complexity-rich tracts occupy residues 148–157 and 193–219; these read RGGMPQPYYG and PTPSGAGSSSQPAAEVSSGQVQQQFQQ. A compositionally biased stretch (polar residues) spans 220–241; sequence LATRDQSSTSQAIQIAPPSSKS. A PAZ domain is found at 457 to 570; sequence PVIDFVAQLL…LPMEVCKIVE (114 aa). In terms of domain architecture, Piwi spans 746-1067; sequence LLIVILPDNN…AAFRARFYME (322 aa).

It belongs to the argonaute family. Ago subfamily.

In terms of biological role, probably involved in the RNA silencing pathway. May bind to short RNAs such as microRNAs (miRNAs) or short interfering RNAs (siRNAs), and represses the translation of mRNAs which are complementary to them. This chain is Protein argonaute 1B (AGO1B), found in Oryza sativa subsp. japonica (Rice).